Consider the following 238-residue polypeptide: MQAVLLVVALFGAALADPPKQIHLPTPKVKRVEKLAHQEHAVNVVQAVPITKTVVRTVNVPKTLIQEVPIHVYTDLVLKSPVPRRKVIDIKKTVLQPHIRHVPVDQPYVVHRRVPVIHTKIVRQPRPVHRIVKIPKLKVVQKQLNRIIDVPQIVTKERIHRVIKPVPVERTRIQHVDVDVPMRVVVPEPVVQDRHTQSVETVPVPHDVVRKVKVPKTFVLKDLIPVPEKAGRHYSSDK.

The signal sequence occupies residues 1–16; it reads MQAVLLVVALFGAALA.

Prismatic layer of shell (at protein level). Expressed primarily in the mantle with highest level in the mantle edge and lower level in the mantle pallium.

It localises to the secreted. The protein is Valine-rich protein of Margaritifera margaritifera (Freshwater pearl mussel).